Here is a 255-residue protein sequence, read N- to C-terminus: Thiazole synthase (255 aa).

Lys96 (schiff-base intermediate with DXP) is an active-site residue. 1-deoxy-D-xylulose 5-phosphate is bound by residues Gly157, 183–184, and 205–206; these read AG and NT.

This sequence belongs to the ThiG family. In terms of assembly, homotetramer. Forms heterodimers with either ThiH or ThiS.

It is found in the cytoplasm. The enzyme catalyses [ThiS sulfur-carrier protein]-C-terminal-Gly-aminoethanethioate + 2-iminoacetate + 1-deoxy-D-xylulose 5-phosphate = [ThiS sulfur-carrier protein]-C-terminal Gly-Gly + 2-[(2R,5Z)-2-carboxy-4-methylthiazol-5(2H)-ylidene]ethyl phosphate + 2 H2O + H(+). Its pathway is cofactor biosynthesis; thiamine diphosphate biosynthesis. Functionally, catalyzes the rearrangement of 1-deoxy-D-xylulose 5-phosphate (DXP) to produce the thiazole phosphate moiety of thiamine. Sulfur is provided by the thiocarboxylate moiety of the carrier protein ThiS. In vitro, sulfur can be provided by H(2)S. This Staphylococcus saprophyticus subsp. saprophyticus (strain ATCC 15305 / DSM 20229 / NCIMB 8711 / NCTC 7292 / S-41) protein is Thiazole synthase.